The following is a 163-amino-acid chain: Neurotrophin-3 (163 aa).

The N-terminal stretch at 1–3 is a signal peptide; it reads IQS. The propeptide occupies 4 to 119; sequence TSMDQGILTE…VLNRTSRRKR (116 aa). N-linked (GlcNAc...) asparagine glycosylation is present at Asn112. Residues 113-133 form a disordered region; it reads RTSRRKREGKSHRGEYSVCDS. A compositionally biased stretch (basic and acidic residues) spans 123–133; sequence SHRGEYSVCDS.

It belongs to the NGF-beta family.

The protein localises to the secreted. Its function is as follows. Seems to promote the survival of visceral and proprioceptive sensory neurons. This is Neurotrophin-3 (NTF3) from Charina bottae (Northern rubber boa).